Reading from the N-terminus, the 311-residue chain is Urease accessory protein UreD (311 aa).

Belongs to the UreD family. In terms of assembly, ureD, UreF and UreG form a complex that acts as a GTP-hydrolysis-dependent molecular chaperone, activating the urease apoprotein by helping to assemble the nickel containing metallocenter of UreC. The UreE protein probably delivers the nickel.

The protein resides in the cytoplasm. Functionally, required for maturation of urease via the functional incorporation of the urease nickel metallocenter. This is Urease accessory protein UreD from Synechococcus sp. (strain CC9902).